Reading from the N-terminus, the 112-residue chain is Large ribosomal subunit protein bL21 (112 aa).

It belongs to the bacterial ribosomal protein bL21 family. In terms of assembly, part of the 50S ribosomal subunit. Contacts protein L20.

This protein binds to 23S rRNA in the presence of protein L20. The polypeptide is Large ribosomal subunit protein bL21 (Buchnera aphidicola subsp. Baizongia pistaciae (strain Bp)).